We begin with the raw amino-acid sequence, 659 residues long: Sodium/nucleoside cotransporter 2 (659 aa).

The segment covering Met-1–Ala-10 has biased composition (basic and acidic residues). Positions Met-1–Pro-22 are disordered. Residue Ser-46 is modified to Phosphoserine. The next 14 membrane-spanning stretches (helical) occupy residues Ile-81 to Asn-101, Ala-105 to Leu-124, Lys-149 to Asp-167, Glu-173 to Lys-193, Arg-201 to Glu-221, Ile-234 to Val-254, Gln-261 to Leu-281, Thr-296 to Met-315, Val-337 to Phe-356, Leu-363 to Tyr-382, Val-424 to Trp-444, Thr-455 to Trp-475, Ala-530 to Leu-550, and Ala-568 to Val-588.

The protein belongs to the concentrative nucleoside transporter (CNT) (TC 2.A.41) family. Expressed in liver (in bile canalicular membrane vesicles (CMV) but not in sinusoidal vesicles), jejunum, spleen and heart. Also expressed in brain and skeletal muscle. Not expressed in kidney, muscle and lung.

Its subcellular location is the membrane. It localises to the apicolateral cell membrane. The enzyme catalyses adenosine(out) + Na(+)(out) = adenosine(in) + Na(+)(in). The catalysed reaction is inosine(out) + Na(+)(out) = inosine(in) + Na(+)(in). It catalyses the reaction guanosine(out) + Na(+)(out) = guanosine(in) + Na(+)(in). It carries out the reaction uridine(out) + Na(+)(out) = uridine(in) + Na(+)(in). Its activity is regulated as follows. Inhibited by formycin B, partially inhibited by purine analog ara-A. Sodium-dependent and purine-selective. Exhibits the transport characteristics of the nucleoside transport system cif or N1 subtype (N1/cif) (selective for purine nucleosides and uridine). Accepts purine, analogs of purine nucleosides and uridine, and exhibits high affinity for adenosine. May contribute to regulate the transport of organic compounds in testes across the blood-testis-barrier. The protein is Sodium/nucleoside cotransporter 2 (Slc28a2) of Rattus norvegicus (Rat).